The sequence spans 547 residues: Probable ABC transporter periplasmic-binding protein SapA (547 aa).

The first 21 residues, 1–21, serve as a signal peptide directing secretion; that stretch reads MRQVLSSLLVIAGLVSGQAIA.

It belongs to the bacterial solute-binding protein 5 family.

The protein localises to the periplasm. In terms of biological role, not part of a putrescine export system. Very similar to a S.typhimurium protein implicated in antimicrobial peptide resistance, but the SapBCDF operon in E.coli is implicated in putrescine export. This chain is Probable ABC transporter periplasmic-binding protein SapA (sapA), found in Escherichia coli (strain K12).